A 445-amino-acid chain; its full sequence is Phosphoglucosamine mutase (445 aa).

Ser-102 functions as the Phosphoserine intermediate in the catalytic mechanism. Mg(2+) is bound by residues Ser-102, Asp-241, Asp-243, and Asp-245. A Phosphoserine modification is found at Ser-102.

Belongs to the phosphohexose mutase family. Mg(2+) is required as a cofactor. Post-translationally, activated by phosphorylation.

It carries out the reaction alpha-D-glucosamine 1-phosphate = D-glucosamine 6-phosphate. Catalyzes the conversion of glucosamine-6-phosphate to glucosamine-1-phosphate. The protein is Phosphoglucosamine mutase of Rhodococcus jostii (strain RHA1).